A 443-amino-acid polypeptide reads, in one-letter code: D-serine dehydratase (443 aa).

Residue lysine 118 is modified to N6-(pyridoxal phosphate)lysine.

The protein belongs to the serine/threonine dehydratase family. DsdA subfamily. As to quaternary structure, monomer. Pyridoxal 5'-phosphate is required as a cofactor.

It carries out the reaction D-serine = pyruvate + NH4(+). The chain is D-serine dehydratase from Yersinia enterocolitica serotype O:8 / biotype 1B (strain NCTC 13174 / 8081).